The following is a 279-amino-acid chain: Apolipoprotein L domain-containing protein 1 (279 aa).

Transmembrane regions (helical) follow at residues 83–105, 122–142, and 192–212; these read SLVA…IVGL, GLGV…SLIF, and IALY…FLIP. A coiled-coil region spans residues 226–253; it reads LKAKIQKLAESLESCTGALDELSEQLES.

The protein belongs to the apolipoprotein L family. As to expression, expressed in neonatal dermal microvascular endothelial cells.

The protein localises to the cell membrane. The protein resides in the cell junction. Its subcellular location is the cytoplasmic vesicle. It is found in the secretory vesicle. Functionally, is a modulator of endothelial barrier permeability, required for proper organization of endothelial cell-cell junctions and cytoskeleton. It also plays a role in the modulation of secretory autophagy. May affect blood-brain barrier permeability. The protein is Apolipoprotein L domain-containing protein 1 (APOLD1) of Homo sapiens (Human).